We begin with the raw amino-acid sequence, 412 residues long: MAGKAAAPGTAVLLVTANVGSLFDDPENLQKNWLREFYQVVHTHKPHFMALHCQEFGGKNYEASMSHVDKFVKELLSSDAMKEYNRARVYLDENFKSQEHFTALGSFYFLHESLKNIYQFDFKAKKYKKVTGKEIYSDTLESTPMLEKEKFPQDYFPECKWSRKGFVRTRWCVADCAFDLVNIHLFHDASNLVAWETSPSVYSGIRHKALGYVLDRIIDQRFEKVSYFVFGDFNFRLDSKSVVETLCTKATMQTVRAADTNEVVKLIFRESDNDRKVMLQLEKKLFHYFNQEVFRDNNGTALLEFDKELSVFKDRLYELDISFPPSYPYSEDSGQGRQYMNTRCPAWCDRVLMSPSARELILKSESEEKVVTYDHIGPNVCMGDHKPVFLAFRIAPGAGKPHAHVHKCCVVQ.

C409 is lipidated: S-farnesyl cysteine. The propeptide at 410–412 (VVQ) is removed in mature form.

It belongs to the inositol 1,4,5-trisphosphate 5-phosphatase type I family. Interacts with TASOR. Post-translationally, isoprenylation at Cys-409 is required for localization at the membrane.

It localises to the cell membrane. Its subcellular location is the cell projection. It is found in the dendrite. The enzyme catalyses 1D-myo-inositol 1,4,5-trisphosphate + H2O = 1D-myo-inositol 1,4-bisphosphate + phosphate. It catalyses the reaction 1D-myo-inositol 1,3,4,5-tetrakisphosphate + H2O = 1D-myo-inositol 1,3,4-trisphosphate + phosphate. With respect to regulation, inhibited by EDTA and 2,3-bisphosphoglycerate. Functionally, phosphatase that specifically hydrolyzes the 5-phosphate of inositol 1,4,5-trisphosphate to inositol 1,4-bisphosphate, and inositol 1,3,4,5-tetrasphosphate to inositol 1,3,4-trisphosphate. Plays a crucial role in the survival of cerebellar Purkinje cells. This is Inositol polyphosphate-5-phosphatase A (INPP5A) from Canis lupus familiaris (Dog).